The primary structure comprises 285 residues: MEAKVLNGKELSTKIKEELKIEVEDLKKNNINPGLAVIIVGNDPASRVYVNSKKKACAEIGIESFEYALEENTTQEELIELIHKLNKDDKVSGILVQLPLPKHIDEEKVIYAIDPSKDVDAFHPVNVGKLMIGNPDFLPCTPAGVMELIKESGIDITGKECVVVGRSNIVGKPMAMLLLAQNGTVTVCHSRTQNIDEVCKRADILVVAVGKPEFIKGSSIKPGAVVIDVGINRLENKKLVGDVEYESASRVASAITPVPGGVGPMTIAMLMKNTVKAAKLQAKMK.

Residues 165–167 (GRS), serine 190, and isoleucine 231 each bind NADP(+).

The protein belongs to the tetrahydrofolate dehydrogenase/cyclohydrolase family. Homodimer.

The catalysed reaction is (6R)-5,10-methylene-5,6,7,8-tetrahydrofolate + NADP(+) = (6R)-5,10-methenyltetrahydrofolate + NADPH. It carries out the reaction (6R)-5,10-methenyltetrahydrofolate + H2O = (6R)-10-formyltetrahydrofolate + H(+). It functions in the pathway one-carbon metabolism; tetrahydrofolate interconversion. Its function is as follows. Catalyzes the oxidation of 5,10-methylenetetrahydrofolate to 5,10-methenyltetrahydrofolate and then the hydrolysis of 5,10-methenyltetrahydrofolate to 10-formyltetrahydrofolate. This Acetivibrio thermocellus (strain ATCC 27405 / DSM 1237 / JCM 9322 / NBRC 103400 / NCIMB 10682 / NRRL B-4536 / VPI 7372) (Clostridium thermocellum) protein is Bifunctional protein FolD.